The sequence spans 462 residues: Argininosuccinate lyase (462 aa).

It belongs to the lyase 1 family. Argininosuccinate lyase subfamily.

It is found in the cytoplasm. It catalyses the reaction 2-(N(omega)-L-arginino)succinate = fumarate + L-arginine. Its pathway is amino-acid biosynthesis; L-arginine biosynthesis; L-arginine from L-ornithine and carbamoyl phosphate: step 3/3. The sequence is that of Argininosuccinate lyase from Ehrlichia ruminantium (strain Welgevonden).